Here is a 233-residue protein sequence, read N- to C-terminus: Thrombin-like enzyme elegaxobin-1 (233 aa).

In terms of domain architecture, Peptidase S1 spans 1–224 (VIGGDECNIN…HLDWIKGIIA (224 aa)). 6 disulfides stabilise this stretch: cysteine 7–cysteine 138, cysteine 25–cysteine 41, cysteine 73–cysteine 231, cysteine 117–cysteine 185, cysteine 149–cysteine 164, and cysteine 175–cysteine 200. Residues histidine 40 and aspartate 85 each act as charge relay system in the active site. Catalysis depends on serine 179, which acts as the Charge relay system.

Belongs to the peptidase S1 family. Snake venom subfamily. As to quaternary structure, monomer. Expressed by the venom gland.

It is found in the secreted. Its function is as follows. Thrombin-like snake venom serine protease that clots rabbit fibrinogen. Only the beta chain of fibrinogen (FGB) is cleaved, releasing fibrinopeptide B. Incubation with human fibrinogen alpha and beta resulted in cleavage of both fibrinogen chains but generated neither fibrinopeptide A nor fibrinopeptide B. Promotes clotting of rabbit fibrinogen, but not bovine or human fibrinogen. In Protobothrops elegans (Elegant pitviper), this protein is Thrombin-like enzyme elegaxobin-1.